The primary structure comprises 203 residues: TATA-binding protein 2 (203 aa).

Tandem repeats lie at residues 28 to 104 (LQNI…ARII) and 118 to 195 (IQNI…YPVL).

Belongs to the TBP family. As to quaternary structure, belongs to the TFIID complex together with the TBP-associated factors (TAFs). Binds DNA as monomer. Interacts with RF2A and TFIIB. Interacts with CWZF7.

The protein localises to the nucleus. Its function is as follows. General transcription factor that functions at the core of the DNA-binding multiprotein factor TFIID. Binding of TFIID to the TATA box is the initial transcriptional step of the pre-initiation complex (PIC), playing a role in the activation of eukaryotic genes transcribed by RNA polymerase II. The protein is TATA-binding protein 2 (TBP2) of Oryza sativa subsp. japonica (Rice).